A 373-amino-acid chain; its full sequence is Dual-specificity RNA methyltransferase RlmN (373 aa).

E94 (proton acceptor) is an active-site residue. A Radical SAM core domain is found at 100-339; it reads EDDRATLCVS…VIVRKTRGDD (240 aa). Residues C107 and C344 are joined by a disulfide bond. The [4Fe-4S] cluster site is built by C114, C118, and C121. Residues 168–169, S200, 222–224, and N301 contribute to the S-adenosyl-L-methionine site; these read GE and SIH. C344 acts as the S-methylcysteine intermediate in catalysis.

Belongs to the radical SAM superfamily. RlmN family. [4Fe-4S] cluster serves as cofactor.

It localises to the cytoplasm. It catalyses the reaction adenosine(2503) in 23S rRNA + 2 reduced [2Fe-2S]-[ferredoxin] + 2 S-adenosyl-L-methionine = 2-methyladenosine(2503) in 23S rRNA + 5'-deoxyadenosine + L-methionine + 2 oxidized [2Fe-2S]-[ferredoxin] + S-adenosyl-L-homocysteine. The enzyme catalyses adenosine(37) in tRNA + 2 reduced [2Fe-2S]-[ferredoxin] + 2 S-adenosyl-L-methionine = 2-methyladenosine(37) in tRNA + 5'-deoxyadenosine + L-methionine + 2 oxidized [2Fe-2S]-[ferredoxin] + S-adenosyl-L-homocysteine. Functionally, specifically methylates position 2 of adenine 2503 in 23S rRNA and position 2 of adenine 37 in tRNAs. m2A2503 modification seems to play a crucial role in the proofreading step occurring at the peptidyl transferase center and thus would serve to optimize ribosomal fidelity. This Shewanella oneidensis (strain ATCC 700550 / JCM 31522 / CIP 106686 / LMG 19005 / NCIMB 14063 / MR-1) protein is Dual-specificity RNA methyltransferase RlmN.